A 213-amino-acid polypeptide reads, in one-letter code: MDPALAAQMSEAVAEKMLQYRRDTAGWKICREGNGVSVSWRPSVEFPGNLYRGEGIVYGTLEEVWDCVKPAVGGLRVKWDENVTGFEIIQSITDTLCVSRTSTPSAAMKLISPRDFVDLVLVKRYEDGTISSNATHVEHPLCPPKPGFVRGFNHPCGCFCEPLPGEPTKTNLVTFFHTDLSGYLPQNVVDSFFPRSMTRFYANLQKAVKQFHE.

Residues 1–213 (MDPALAAQMS…LQKAVKQFHE (213 aa)) enclose the START domain.

Its function is as follows. May be involved in the intracellular transport of sterols or other lipids. May bind cholesterol or other sterols. In Homo sapiens (Human), this protein is StAR-related lipid transfer protein 5 (STARD5).